A 361-amino-acid chain; its full sequence is Phosphoserine aminotransferase (361 aa).

Position 43 (R43) interacts with L-glutamate. Residues 77-78, W103, T152, D172, and Q195 contribute to the pyridoxal 5'-phosphate site; that span reads AS. K196 carries the N6-(pyridoxal phosphate)lysine modification. 237-238 contributes to the pyridoxal 5'-phosphate binding site; the sequence is NT.

The protein belongs to the class-V pyridoxal-phosphate-dependent aminotransferase family. SerC subfamily. As to quaternary structure, homodimer. It depends on pyridoxal 5'-phosphate as a cofactor.

The protein localises to the cytoplasm. The catalysed reaction is O-phospho-L-serine + 2-oxoglutarate = 3-phosphooxypyruvate + L-glutamate. The enzyme catalyses 4-(phosphooxy)-L-threonine + 2-oxoglutarate = (R)-3-hydroxy-2-oxo-4-phosphooxybutanoate + L-glutamate. It participates in amino-acid biosynthesis; L-serine biosynthesis; L-serine from 3-phospho-D-glycerate: step 2/3. The protein operates within cofactor biosynthesis; pyridoxine 5'-phosphate biosynthesis; pyridoxine 5'-phosphate from D-erythrose 4-phosphate: step 3/5. In terms of biological role, catalyzes the reversible conversion of 3-phosphohydroxypyruvate to phosphoserine and of 3-hydroxy-2-oxo-4-phosphonooxybutanoate to phosphohydroxythreonine. The protein is Phosphoserine aminotransferase of Desulfatibacillum aliphaticivorans.